The following is a 1155-amino-acid chain: MARYTQRPENALKRANEFIEVGKPLRALDTLQEVFRNKRWNYAYSETVIEPLMFKYLYLCVELKKSHIAKEGLFQYRNMFQLVNVNSLENVIRGYLKMAEEHTEAAQAQSSAAVAVLELDDLDNIATPESILMSAVCGEDAQDRSDRTILLPWVKFLWESYCQCLELLRVNTHCEALYHDIARMAFQFCLKYNRKSEFRRLCDKLRKHLEDICKSSNQTTGVSINKVETQQLCLDTRLYLLDSAIQMELWQEAYKAIEDIHGLMALSKKTPVPKTMANYYQKLAMVFSKAGNQLFHAAALLKLFQLTRELKKNLTKDDLQRMAAHVLLATLSIPLPSAHPEFDRFIEADKSPLEKAQKLAVLLGLPQPPTRVSLIREVVRLNVPQLVSEDFRNLYNWLEVDFNPLNLCKRIQSIVDIIETGPTETNLLSPYIQSLKDVTIMRLIRQISQVYESIEFKRLLELATFCNIFELEKLLVESVRHNDMQIRIDHQKNSIYFGTDLTESQREYRPDGPALQSMPSEQIRSQLVNMSTVLTRAVSIVYPNRERDQRAKLRTQMVHHYHEIKDREHQRILQRQKIIEDRKEYIEKQNNAREEEEARRQEEESRKAKLAEQKRLELEQEERERKRHQNEIQAIKEKSLKEKVQQISQTAHGKKMLSKLDEEGIKKLDAEQIAKRESEELQREAKELQSKLKSQEKKIDYYERAKRLEEIPLFEKYLAEKQVKDKEFWEATEKTRIENAIAERKDAVSQQERLKRMYPDRDEFLEALKKERASLYVEKLKKFEIALEAERKKRLADRVIRRREERRQAFLREKEEERLRKEEEIRLAQAAEERAAAEARRLEREAEDEKRRAQYEKQRAKEEEAERKIKEDRDRLAREVAVERERSDKERDTWRPRGGDRPSAASAGGGGGAGEWRRAAAPIGDRNERAGDRIERGGERMERGGDRMERGGDRMERGGERTEHRDRERRDNEGADSSWRVRREPDSQRGAGVKDASGSAAPPSRDDKWRRGGDRDRDRDRDFRNDGPRRDRDDRDDRDRGGFRRNDGPRRNDDAAPRETGGNWRDAPRQSDRDNRRPAGDRRDREVRGGDLRGPESRAPKEGGPSGGTGTAASGGGNWRTAPGPRDEPAPKRDQPQDKENKAVDDGEWTSVKRR.

In terms of domain architecture, PCI spans 319–502; sequence LQRMAAHVLL…NSIYFGTDLT (184 aa). Disordered regions lie at residues 589–613 and 836–1155; these read QNNA…LAEQ and AAEA…VKRR. Basic and acidic residues-rich tracts occupy residues 836–900, 925–987, 1004–1057, and 1066–1101; these read AAEA…RGGD, DRNE…EPDS, SRDD…DAAP, and DAPR…RAPK. Positions 1104–1118 are enriched in gly residues; sequence GPSGGTGTAASGGGN. Residues 1125–1145 show a composition bias toward basic and acidic residues; sequence PRDEPAPKRDQPQDKENKAVD.

It belongs to the eIF-3 subunit A family. Component of the eukaryotic translation initiation factor 3 (eIF-3) complex. The eIF-3 complex interacts with pix.

The protein resides in the cytoplasm. Its function is as follows. RNA-binding component of the eukaryotic translation initiation factor 3 (eIF-3) complex, which is involved in protein synthesis of a specialized repertoire of mRNAs and, together with other initiation factors, stimulates binding of mRNA and methionyl-tRNAi to the 40S ribosome. The eIF-3 complex specifically targets and initiates translation of a subset of mRNAs involved in cell proliferation. The chain is Eukaryotic translation initiation factor 3 subunit A from Drosophila pseudoobscura pseudoobscura (Fruit fly).